The primary structure comprises 303 residues: NAD kinase (303 aa).

Asp85 serves as the catalytic Proton acceptor. NAD(+) contacts are provided by residues 85 to 86, Arg90, 159 to 160, Lys187, Asp189, Ala224, and Gln259; these read DG and ND.

Belongs to the NAD kinase family. Requires a divalent metal cation as cofactor.

The protein localises to the cytoplasm. It catalyses the reaction NAD(+) + ATP = ADP + NADP(+) + H(+). In terms of biological role, involved in the regulation of the intracellular balance of NAD and NADP, and is a key enzyme in the biosynthesis of NADP. Catalyzes specifically the phosphorylation on 2'-hydroxyl of the adenosine moiety of NAD to yield NADP. This Bdellovibrio bacteriovorus (strain ATCC 15356 / DSM 50701 / NCIMB 9529 / HD100) protein is NAD kinase.